The following is an 87-amino-acid chain: Large ribosomal subunit protein bL27 (87 aa).

The protein belongs to the bacterial ribosomal protein bL27 family.

The protein is Large ribosomal subunit protein bL27 of Pseudarthrobacter chlorophenolicus (strain ATCC 700700 / DSM 12829 / CIP 107037 / JCM 12360 / KCTC 9906 / NCIMB 13794 / A6) (Arthrobacter chlorophenolicus).